Reading from the N-terminus, the 815-residue chain is Leucine--tRNA ligase (815 aa).

Positions 41–51 match the 'HIGH' region motif; that stretch reads PYPSGTLHVGH. The 'KMSKS' region motif lies at 576 to 580; it reads KMSKS. Residue lysine 579 participates in ATP binding.

This sequence belongs to the class-I aminoacyl-tRNA synthetase family.

Its subcellular location is the cytoplasm. It catalyses the reaction tRNA(Leu) + L-leucine + ATP = L-leucyl-tRNA(Leu) + AMP + diphosphate. This Pseudothermotoga lettingae (strain ATCC BAA-301 / DSM 14385 / NBRC 107922 / TMO) (Thermotoga lettingae) protein is Leucine--tRNA ligase.